Consider the following 72-residue polypeptide: Translation initiation factor IF-1 (72 aa).

The S1-like domain occupies methionine 1–lysine 72.

Belongs to the IF-1 family. Component of the 30S ribosomal translation pre-initiation complex which assembles on the 30S ribosome in the order IF-2 and IF-3, IF-1 and N-formylmethionyl-tRNA(fMet); mRNA recruitment can occur at any time during PIC assembly.

It localises to the cytoplasm. Functionally, one of the essential components for the initiation of protein synthesis. Stabilizes the binding of IF-2 and IF-3 on the 30S subunit to which N-formylmethionyl-tRNA(fMet) subsequently binds. Helps modulate mRNA selection, yielding the 30S pre-initiation complex (PIC). Upon addition of the 50S ribosomal subunit IF-1, IF-2 and IF-3 are released leaving the mature 70S translation initiation complex. This is Translation initiation factor IF-1 from Campylobacter jejuni subsp. doylei (strain ATCC BAA-1458 / RM4099 / 269.97).